The primary structure comprises 413 residues: Probable alpha-tubulin polyglutamylase Ttll1 (413 aa).

The 369-residue stretch at Ala2–Thr370 folds into the TTL domain. ATP is bound by residues Ser184–Ile187, Lys197, and Asp199.

This sequence belongs to the tubulin polyglutamylase family.

The protein localises to the cytoplasm. Its subcellular location is the cytoskeleton. It localises to the cilium basal body. The protein resides in the contractile vacuole. In terms of biological role, probable tubulin polyglutamylase with a strong preference for alpha-tubulin. Modifies alpha-tubulin, generating side chains of glutamate on the gamma-carboxyl groups of specific glutamate residues within the C-terminal tail of alpha-tubulin. The polypeptide is Probable alpha-tubulin polyglutamylase Ttll1 (Ttll1) (Tetrahymena thermophila (strain SB210)).